A 334-amino-acid chain; its full sequence is Phospho-N-acetylmuramoyl-pentapeptide-transferase (334 aa).

9 consecutive transmembrane segments (helical) span residues 5–25 (VVWL…PVTI), 52–72 (PTMG…VLLV), 81–101 (GLVV…DDFI), 116–136 (KILG…FKLG), 148–168 (GISF…VLLG), 181–200 (GLAS…LALV), 230–250 (VFMG…GAVV), 256–276 (LLVV…IQVI), and 309–329 (FWLL…DFWL).

This sequence belongs to the glycosyltransferase 4 family. MraY subfamily. The cofactor is Mg(2+).

The protein localises to the cell membrane. The catalysed reaction is UDP-N-acetyl-alpha-D-muramoyl-L-alanyl-gamma-D-glutamyl-meso-2,6-diaminopimeloyl-D-alanyl-D-alanine + di-trans,octa-cis-undecaprenyl phosphate = di-trans,octa-cis-undecaprenyl diphospho-N-acetyl-alpha-D-muramoyl-L-alanyl-D-glutamyl-meso-2,6-diaminopimeloyl-D-alanyl-D-alanine + UMP. Its pathway is cell wall biogenesis; peptidoglycan biosynthesis. Functionally, catalyzes the initial step of the lipid cycle reactions in the biosynthesis of the cell wall peptidoglycan: transfers peptidoglycan precursor phospho-MurNAc-pentapeptide from UDP-MurNAc-pentapeptide onto the lipid carrier undecaprenyl phosphate, yielding undecaprenyl-pyrophosphoryl-MurNAc-pentapeptide, known as lipid I. This chain is Phospho-N-acetylmuramoyl-pentapeptide-transferase, found in Desulforamulus reducens (strain ATCC BAA-1160 / DSM 100696 / MI-1) (Desulfotomaculum reducens).